The sequence spans 184 residues: Tumor necrosis factor receptor superfamily member 17 (184 aa).

The Extracellular segment spans residues 1–54 (MLQMAGQCSQNEYFDSLLHACIPCQLRCSSNTPPLTCQRYCNASVTNSVKGTNA). The stretch at 7 to 41 (QCSQNEYFDSLLHACIPCQLRCSSNTPPLTCQRYC) is one TNFR-Cys repeat. Disulfide bonds link C8–C21, C24–C37, and C28–C41. Residues 55 to 77 (ILWTCLGLSLIISLAVFVLMFLL) form a helical; Signal-anchor for type III membrane protein membrane-spanning segment. The Cytoplasmic portion of the chain corresponds to 78-184 (RKINSEPLKD…TEIEKSISAR (107 aa)).

As to quaternary structure, associates with TRAF1, TRAF2, TRAF3, TRAF5 and TRAF6. In terms of tissue distribution, expressed in mature B-cells, but not in T-cells or monocytes.

It is found in the cell membrane. Its subcellular location is the endomembrane system. Functionally, receptor for TNFSF13B/BLyS/BAFF and TNFSF13/APRIL. Promotes B-cell survival and plays a role in the regulation of humoral immunity. Activates NF-kappa-B and JNK. In Homo sapiens (Human), this protein is Tumor necrosis factor receptor superfamily member 17 (TNFRSF17).